A 256-amino-acid polypeptide reads, in one-letter code: MGNNCYNVVVIVLLLVGCEKVGAVQNSCDNCQPGTFCRKYNPVCKSCPPSTFSSIGGQPNCNICRVCAGYFRFKKFCSSTHNAECECIEGFHCLGPQCTRCEKDCRPGQELTKQGCKTCSLGTFNDQNGTGVCRPWTNCSLDGRSVLKTGTTEKDVVCGPPVVSFSPSTTISVTPEGGPGGHSLQVLTLFLALTSALLLALIFITLLFSVLKWIRKKFPHIFKQPFKKTTGAAQEEDACSCRCPQEEEGGGGGYEL.

The signal sequence occupies residues 1–23 (MGNNCYNVVVIVLLLVGCEKVGA). TNFR-Cys repeat units follow at residues 24–45 (VQNS…PVCK), 46–85 (SCPP…NAEC), 86–117 (ECIE…QGCK), and 118–159 (TCSL…VVCG). At 24–187 (VQNSCDNCQP…GPGGHSLQVL (164 aa)) the chain is on the extracellular side. Disulfide bonds link Cys-28–Cys-37, Cys-31–Cys-44, Cys-47–Cys-61, Cys-64–Cys-77, Cys-67–Cys-85, Cys-87–Cys-93, Cys-98–Cys-105, Cys-101–Cys-116, and Cys-119–Cys-133. Residues Asn-128 and Asn-138 are each glycosylated (N-linked (GlcNAc...) asparagine). Cysteines 139 and 158 form a disulfide. The helical transmembrane segment at 188 to 208 (TLFLALTSALLLALIFITLLF) threads the bilayer. Topologically, residues 209–256 (SVLKWIRKKFPHIFKQPFKKTTGAAQEEDACSCRCPQEEEGGGGGYEL) are cytoplasmic.

As to quaternary structure, predominantly homodimeric, but may also exist as a monomer. Associates with p56-LCK. Interacts with TRAF1, TRAF2 and TRAF3. As to expression, expressed in activated thymocytes, splenic T cells, CD4(+), and CD8(+) T-cells.

It is found in the cell membrane. Receptor for TNFSF9/4-1BBL. Conveys a signal that enhances CD8(+) T-cell survival, cytotoxicity, and mitochondrial activity, thereby promoting immunity against viruses and tumors. In Mus musculus (Mouse), this protein is Tumor necrosis factor receptor superfamily member 9 (Tnfrsf9).